The primary structure comprises 925 residues: Collagen alpha-2(I) chain (925 aa).

The interval 1–925 (SGGFDFSFLP…FGYEGDFYRA (925 aa)) is disordered. 4-hydroxyproline occurs at positions 10 and 13. The segment covering 22–34 (RYYGVGLGPGPMG) has biased composition (gly residues). A compositionally biased stretch (low complexity) spans 35–74 (LMGPRGPPGASGAPGPQGFQGPAGEPGEPGQTGPAGARGP). Residues proline 42 and proline 48 each carry the 4-hydroxyproline modification. Lysine 103 carries the post-translational modification 5-hydroxylysine; alternate. O-linked (Gal...) hydroxylysine; alternate glycosylation is present at lysine 103. Residues 154-171 (DGSVGPVGPAGPIGSAGP) are compositionally biased toward low complexity. The segment covering 271 to 280 (GESGGKGEPG) has biased composition (gly residues). Over residues 281 to 291 (SAGPQGPPGSS) the composition is skewed to low complexity. A compositionally biased stretch (gly residues) spans 306-315 (GLRGGPGSRG). 3 positions are modified to 4-hydroxyproline: proline 317, proline 332, and proline 335. The span at 363–379 (IDGRPGPIGPAGARGEA) shows a compositional bias: low complexity. Residues 423-432 (GVQGGKGEQG) show a composition bias toward gly residues. Composition is skewed to low complexity over residues 479 to 496 (PGES…SRGP) and 508 to 518 (EPGVVGAPGTA). Positions 519 to 528 (GPAGSGGLPG) are enriched in gly residues. Composition is skewed to low complexity over residues 551-595 (VGTT…PRGS) and 602-622 (VGPA…QPGA). The span at 623-632 (KGERGTKGPK) shows a compositional bias: basic and acidic residues. Residues 640–650 (PTGPVGSAGPA) show a composition bias toward low complexity. Gly residues predominate over residues 660-669 (GSRGDGGPPG). Positions 671-680 (TGFPGAAGRT) are enriched in low complexity. A compositionally biased stretch (gly residues) spans 696 to 718 (GAAGKGDQGPVGRGETGAGGPPG). 2 stretches are compositionally biased toward low complexity: residues 719–753 (FTGE…LGLP) and 761–771 (LPGVAGAVGEP). The span at 772-782 (GPLGIGPPGAR) shows a compositional bias: gly residues. The span at 791–806 (EPGPVGSVGPVGALGP) shows a compositional bias: low complexity. Basic and acidic residues predominate over residues 816–827 (RGDKGEPGEKGP). Residues 897–907 (PAGPPGPPGPP) show a composition bias toward pro residues.

Belongs to the fibrillar collagen family. As to quaternary structure, trimers of one alpha 2(I) and two alpha 1(I) chains. Interacts (via C-terminus) with TMEM131 (via PapD-L domain); the interaction is direct and is involved in assembly and TRAPPIII ER-to-Golgi transport complex-dependent secretion of collagen. Post-translationally, prolines at the third position of the tripeptide repeating unit (G-X-Y) are hydroxylated in some or all of the chains. In terms of tissue distribution, expressed in bones.

The protein resides in the secreted. It localises to the extracellular space. The protein localises to the extracellular matrix. Type I collagen is a member of group I collagen (fibrillar forming collagen). In Acratocnus sp. (strain SLP-2019) (Ground sloth), this protein is Collagen alpha-2(I) chain.